The following is a 401-amino-acid chain: NADH-ubiquinone oxidoreductase 49 kDa subunit (401 aa).

It belongs to the complex I 49 kDa subunit family.

The protein localises to the mitochondrion. It carries out the reaction a ubiquinone + NADH + 5 H(+)(in) = a ubiquinol + NAD(+) + 4 H(+)(out). Core subunit of the mitochondrial membrane respiratory chain NADH dehydrogenase (Complex I) that is believed to belong to the minimal assembly required for catalysis. Complex I functions in the transfer of electrons from NADH to the respiratory chain. The immediate electron acceptor for the enzyme is believed to be ubiquinone. Component of the iron-sulfur (IP) fragment of the enzyme. The chain is NADH-ubiquinone oxidoreductase 49 kDa subunit (NAD7) from Acanthamoeba castellanii (Amoeba).